The sequence spans 163 residues: Lysosomal enzyme trafficking factor (163 aa).

2 consecutive transmembrane segments (helical) span residues 40-60 (MGWI…YYVF) and 98-118 (LPFW…FLFL).

It belongs to the LYSET family. As to quaternary structure, interacts with GNPTAB; this interaction is important for proper localization of GNPTAB in Golgi stacks. Interacts with MBTPS1.

It is found in the golgi apparatus membrane. Required for mannose-6-phosphate-dependent trafficking of lysosomal enzymes. LYSET bridges GlcNAc-1-phosphate transferase (GNPTAB), to the membrane-bound transcription factor site-1 protease (MBTPS1), thus allowing proteolytic activation of the GNPTAB. GNPTAB is involved in the regulation of M6P-dependent Golgi-to-lysosome trafficking of lysosomal enzymes. LYSET is thus an essential factor for maturation and delivery of lysosomal hydrolases. This Bos taurus (Bovine) protein is Lysosomal enzyme trafficking factor (LYSET).